The following is a 579-amino-acid chain: Cytochrome P450 monooxygenase ORF6 (579 aa).

N2 carries N-linked (GlcNAc...) asparagine glycosylation. The chain crosses the membrane as a helical span at residues 7 to 29 (PLGSFVGTTLLLFILYKLVKLAY). 2 N-linked (GlcNAc...) asparagine glycosylation sites follow: N194 and N390. C512 is a heme binding site.

This sequence belongs to the cytochrome P450 family. Heme serves as cofactor.

The protein resides in the membrane. Its pathway is sesquiterpene biosynthesis. In terms of biological role, cytochrome P450 monooxygenase; part of the gene cluster that mediates the biosynthesis of PR-toxin, a bicyclic sesquiterpene belonging to the eremophilane class and acting as a mycotoxin. The first step of the pathway is catalyzed by the aristolochene synthase which performs the cyclization of trans,trans-farnesyl diphosphate (FPP) to the bicyclic sesquiterpene aristolochene. Following the formation of aristolochene, the non-oxygenated aristolochene is converted to the trioxygenated intermediate eremofortin B, via 7-epi-neopetasone. This conversion appears to involve three enzymes, a hydroxysterol oxidase-like enzyme, the quinone-oxidase prx3 that forms the quinone-type-structure in the bicyclic nucleus of aristolochene with the C8-oxo group and the C-3 hydroxyl group, and the P450 monooxygenase ORF6 that introduces the epoxide at the double bond between carbons 1 and 2. No monoxy or dioxy-intermediates have been reported to be released to the broth, so these three early oxidative reactions may be coupled together. Eremofortin B is further oxidized by another P450 monooxygenase, that introduces a second epoxide between carbons 7 and 11 prior to acetylation to eremofortin A by the acetyltransferase ORF8. The second epoxidation may be performed by a second P450 monooxygenase. After the acetylation step, eremofortin A is converted to eremofortin C and then to PR-toxin. First the conversion of eremofortin A to eremofortin C proceeds by oxidation of the side chain of the molecule at C-12 and is catalyzed by the short-chain oxidoreductase prx1. The cytochrome P450 monooxygenase ORF6 is probably also involved in this step. The primary alcohol formed at C-12 is finally oxidized by the short-chain alcohol dehydrogenase prx4 that forms PR-toxin. The sequence is that of Cytochrome P450 monooxygenase ORF6 from Penicillium roqueforti (strain FM164).